The following is a 1066-amino-acid chain: Coiled-coil domain-containing protein 73 (1066 aa).

Coiled coils occupy residues 47-134 (KAET…QVSQ) and 178-391 (LVRE…KTEE). Disordered stretches follow at residues 568-600 (LDTR…SNPF), 719-811 (SENS…PKSG), 854-883 (LSPA…PEKT), 944-978 (KNIE…EERN), and 1003-1027 (VQQS…PGNN). 5 stretches are compositionally biased toward polar residues: residues 591–600 (NTDGSESNPF), 742–781 (RTNT…TSQA), 789–811 (PLTT…PKSG), 857–869 (ATPS…TSAR), and 948–964 (SDPT…SNWS). Positions 967–978 (LDPKGQPREERN) are enriched in basic and acidic residues. Positions 1003 to 1013 (VQQSHSQTVKV) are enriched in polar residues.

This Mus musculus (Mouse) protein is Coiled-coil domain-containing protein 73 (Ccdc73).